The chain runs to 636 residues: Chaperone protein HtpG (636 aa).

Residues Met1–Arg342 form an a; substrate-binding region. Positions Glu343–Lys558 are b. Positions Met559–Leu636 are c.

It belongs to the heat shock protein 90 family. Homodimer.

It is found in the cytoplasm. Its function is as follows. Molecular chaperone. Has ATPase activity. In Salinispora arenicola (strain CNS-205), this protein is Chaperone protein HtpG.